Consider the following 202-residue polypeptide: Dephospho-CoA kinase (202 aa).

The region spanning 6–202 (KISVTGDPSS…QCFKALKGTI (197 aa)) is the DPCK domain. 14 to 19 (SSGKTE) lines the ATP pocket.

The protein belongs to the CoaE family.

It is found in the cytoplasm. The enzyme catalyses 3'-dephospho-CoA + ATP = ADP + CoA + H(+). It participates in cofactor biosynthesis; coenzyme A biosynthesis; CoA from (R)-pantothenate: step 5/5. In terms of biological role, catalyzes the phosphorylation of the 3'-hydroxyl group of dephosphocoenzyme A to form coenzyme A. This is Dephospho-CoA kinase from Chlamydia muridarum (strain MoPn / Nigg).